The chain runs to 537 residues: Tegument protein BRRF2 (537 aa).

Disordered regions lie at residues 321–366 (RPRF…AVPP), 378–398 (AKQN…ETSP), 414–466 (SKQH…DEEF), and 486–537 (GLRV…LSVV). A compositionally biased stretch (polar residues) spans 334–347 (EPQQTCSQLTSRGN). Residues 423-441 (SSQAAPSFSSVAPVASLSG) are compositionally biased toward low complexity. Residues 492–517 (DEDEDGSEDGEFSDLDLSDSDHEGDE) show a composition bias toward acidic residues.

The protein belongs to the lymphocryptovirus BRRF2 family.

Its subcellular location is the virion tegument. The protein is Tegument protein BRRF2 of Homo sapiens (Human).